The following is a 217-amino-acid chain: uncharacterized protein (217 aa).

This sequence to M.tuberculosis Rv2926c.

This is an uncharacterized protein from Mycobacterium leprae (strain TN).